We begin with the raw amino-acid sequence, 145 residues long: D-aminoacyl-tRNA deacylase (145 aa).

The Gly-cisPro motif, important for rejection of L-amino acids signature appears at 137–138 (GP).

The protein belongs to the DTD family. Homodimer.

It localises to the cytoplasm. The enzyme catalyses glycyl-tRNA(Ala) + H2O = tRNA(Ala) + glycine + H(+). It catalyses the reaction a D-aminoacyl-tRNA + H2O = a tRNA + a D-alpha-amino acid + H(+). In terms of biological role, an aminoacyl-tRNA editing enzyme that deacylates mischarged D-aminoacyl-tRNAs. Also deacylates mischarged glycyl-tRNA(Ala), protecting cells against glycine mischarging by AlaRS. Acts via tRNA-based rather than protein-based catalysis; rejects L-amino acids rather than detecting D-amino acids in the active site. By recycling D-aminoacyl-tRNA to D-amino acids and free tRNA molecules, this enzyme counteracts the toxicity associated with the formation of D-aminoacyl-tRNA entities in vivo and helps enforce protein L-homochirality. This is D-aminoacyl-tRNA deacylase from Lactobacillus gasseri (strain ATCC 33323 / DSM 20243 / BCRC 14619 / CIP 102991 / JCM 1131 / KCTC 3163 / NCIMB 11718 / NCTC 13722 / AM63).